The chain runs to 70 residues: Palustrin-2ISa (70 aa).

Residues 1 to 22 (MFTLKKSLLLLFFLGTISLSLC) form the signal peptide. Residues 23–39 (EQERSAEDEGEVIEEEV) constitute a propeptide, removed in mature form. The cysteines at positions 64 and 70 are disulfide-linked.

Expressed by the skin glands.

The protein resides in the secreted. Has antimicrobial activity against Gram-negative bacterium E.coli ATCC 8739 (MIC=100 ug), against Gram positive bacteria S.aureus ATCC 6538 (MIC=25 ug), methicillin-resistant S.aureus ATCC 43300 (MIC=100 ug), B.subtilis ATCC 6633 (MIC=12.5 ug) and against fungus C.albicans ATCC 90028 (MIC=100 ug). The sequence is that of Palustrin-2ISa from Odorrana ishikawae (Ishikawa's frog).